A 70-amino-acid chain; its full sequence is Large ribosomal subunit protein bL31 (70 aa).

Residues Cys16, Cys18, Cys38, and Cys41 each contribute to the Zn(2+) site.

The protein belongs to the bacterial ribosomal protein bL31 family. Type A subfamily. As to quaternary structure, part of the 50S ribosomal subunit. Requires Zn(2+) as cofactor.

In terms of biological role, binds the 23S rRNA. The sequence is that of Large ribosomal subunit protein bL31 from Mycolicibacterium gilvum (strain PYR-GCK) (Mycobacterium gilvum (strain PYR-GCK)).